Reading from the N-terminus, the 431-residue chain is tRNA (adenine(37)-N6)-methyltransferase (431 aa).

Residues 30–168 (TEPIGYLESC…YIADYDSPQN (139 aa)) form the TsaA-like domain. Residues 47–49 (PRQ), 90–91 (HK), Arg117, Leu127, and 148–151 (IDGT) each bind S-adenosyl-L-methionine. Residues 196–242 (LSGRGKVQPRQSTKERPKCLEDRTSGENSQKSRDMSEIQHTLPEDRE) are disordered. Residues 207–242 (STKERPKCLEDRTSGENSQKSRDMSEIQHTLPEDRE) show a composition bias toward basic and acidic residues.

The protein belongs to the tRNA methyltransferase O family.

The catalysed reaction is N(6)-L-threonylcarbamoyladenosine(37) in tRNA + S-adenosyl-L-methionine = N(6)-methyl,N(6)-L-threonylcarbamoyladenosine(37) in tRNA + S-adenosyl-L-homocysteine + H(+). S-adenosyl-L-methionine-dependent methyltransferase responsible for the addition of the methyl group in the formation of N6-methyl-N6-threonylcarbamoyladenosine at position 37 (m(6)t(6)A37) of the tRNA anticodon loop of tRNA(Ser)(GCU). The methyl group of m(6)t(6)A37 may improve the efficiency of the tRNA decoding ability. May bind to tRNA. In Mus musculus (Mouse), this protein is tRNA (adenine(37)-N6)-methyltransferase.